The chain runs to 224 residues: MEYNRQPCPIRIVEDCGCAFMMGTMGGSLFQYLKGFRNAPSGLRRGLHGGIESVRLRTPAIAGSFAIWGATFSTVDCVMVSYRQREDSWNAIVSGAATGGILAARNGIRAMANSAFVGCLVLAMLEGAGAAVATIYASDGGVKAEESLITVDQQMQRPQWETSVADSNLTGAELERVLDECRAYRAHNKMQQPMRSDAVEGKELGQLMKPMHSLVDLVKLAEIV.

The next 3 membrane-spanning stretches (helical) occupy residues 16–36 (CGCA…LKGF), 60–80 (AIAG…CVMV), and 115–135 (AFVG…VATI).

Belongs to the Tim17/Tim22/Tim23 family. As to quaternary structure, component of the TIM23 complex at least composed of Tim23, Tim17 (Tim17a1, Tim17a2 or Tim17b1) and a Tim50. The complex interacts with the Tim44 component of the PAM complex.

It is found in the mitochondrion inner membrane. Essential component of the TIM23 complex, a complex that mediates the translocation of transit peptide-containing proteins across the mitochondrial inner membrane. This chain is Probable mitochondrial import inner membrane translocase subunit Tim17 4 (Tim17a2), found in Drosophila melanogaster (Fruit fly).